The following is a 90-amino-acid chain: DNA-binding protein HU-1 (90 aa).

Threonine 4 is subject to Phosphothreonine.

Belongs to the bacterial histone-like protein family. Homodimer.

In terms of biological role, histone-like DNA-binding protein which is capable of wrapping DNA to stabilize it, and thus to prevent its denaturation under extreme environmental conditions. This is DNA-binding protein HU-1 (hup2) from Halalkalibacterium halodurans (strain ATCC BAA-125 / DSM 18197 / FERM 7344 / JCM 9153 / C-125) (Bacillus halodurans).